Reading from the N-terminus, the 393-residue chain is Rhizopuspepsin (393 aa).

The first 21 residues, 1–21 (MKFTLISSCIAIAALAVAVDA), serve as a signal peptide directing secretion. A propeptide spans 22-68 (APGEKKISIPLAKNPNYKPSAKNAIQKAIAKYNKHKINTSTGGIVPD) (activation peptide). The 305-residue stretch at 85 to 389 (YYGQVTIGTP…NQGVPEVQIA (305 aa)) folds into the Peptidase A1 domain. Residue D103 is part of the active site. C116 and C119 are joined by a disulfide. D286 is an active-site residue. C320 and C353 are disulfide-bonded.

This sequence belongs to the peptidase A1 family.

The enzyme catalyses Hydrolysis of proteins with broad specificity similar to that of pepsin A, preferring hydrophobic residues at P1 and P1'. Clots milk and activates trypsinogen. Does not cleave 4-Gln-|-His-5, but does cleave 10-His-|-Leu-11 and 12-Val-|-Glu-13 in B chain of insulin.. The chain is Rhizopuspepsin from Rhizopus chinensis (Bread mold).